A 571-amino-acid chain; its full sequence is Cilia- and flagella-associated protein 52 (571 aa).

WD repeat units lie at residues 62–106 (GHGN…LLAR), 109–150 (LHKG…AICG), 156–195 (LNVG…RKIW), 288–327 (QSQG…ETLI), 330–364 (CHFE…TSSN), 366–405 (AHRI…QKLE), 410–449 (EHKS…RNQM), 451–490 (LANT…VIRE), 494–533 (SLSG…VTHV), and 536–571 (GHSG…PYTS).

This sequence belongs to the CFAP52 family. In terms of assembly, microtubule inner protein component of sperm flagellar doublet microtubules. Interacts with BRCA2. Interacts with the CCT chaperonin complex. Interacts with HSP70. Interacts with AK8. Interacts with CFAP45. Interacts with DNAI1. Interacts with IQDC.

It localises to the cytoplasm. The protein resides in the cytoskeleton. It is found in the cilium axoneme. The protein localises to the flagellum axoneme. Microtubule inner protein (MIP) part of the dynein-decorated doublet microtubules (DMTs) in cilia axoneme. Important for proper ciliary and flagellar beating. May act in cooperation with CFAP45 and axonemal dynein subunit DNAH11. May play a role in cell growth and/or survival. The polypeptide is Cilia- and flagella-associated protein 52 (Macaca fascicularis (Crab-eating macaque)).